Reading from the N-terminus, the 432-residue chain is Enolase (432 aa).

Gln-163 is a binding site for (2R)-2-phosphoglycerate. Catalysis depends on Glu-205, which acts as the Proton donor. Mg(2+)-binding residues include Asp-242, Glu-285, and Asp-312. Residues Lys-337, Arg-366, Ser-367, and Lys-388 each contribute to the (2R)-2-phosphoglycerate site. Lys-337 acts as the Proton acceptor in catalysis.

The protein belongs to the enolase family. The cofactor is Mg(2+).

The protein resides in the cytoplasm. The protein localises to the secreted. It localises to the cell surface. It carries out the reaction (2R)-2-phosphoglycerate = phosphoenolpyruvate + H2O. It functions in the pathway carbohydrate degradation; glycolysis; pyruvate from D-glyceraldehyde 3-phosphate: step 4/5. Catalyzes the reversible conversion of 2-phosphoglycerate (2-PG) into phosphoenolpyruvate (PEP). It is essential for the degradation of carbohydrates via glycolysis. The protein is Enolase of Bifidobacterium longum subsp. infantis (strain ATCC 15697 / DSM 20088 / JCM 1222 / NCTC 11817 / S12).